Here is a 320-residue protein sequence, read N- to C-terminus: GPI-specific phospholipase A2-like PGAP3 (320 aa).

The signal sequence occupies residues 1–23; it reads MAKRTAPLLLLTLAVGLAGGSQG. The Lumenal portion of the chain corresponds to 24 to 98; the sequence is DREPVYRDCV…QFHGKWPFSR (75 aa). N-linked (GlcNAc...) asparagine glycosylation occurs at asparagine 40. A helical transmembrane segment spans residues 99–119; the sequence is FLFIQEPASAVASLLNGLASL. Topologically, residues 120–135 are cytoplasmic; the sequence is VMLCRYRASVPASSPM. A helical transmembrane segment spans residues 136 to 156; it reads YHTCMAFAWVSLNAWFWSTVF. The Lumenal segment spans residues 157 to 169; sequence HTRDTDLTEKMDY. A helical transmembrane segment spans residues 170 to 190; it reads FCASAVILHSVYLCCVRTVGL. The Cytoplasmic portion of the chain corresponds to 191 to 198; that stretch reads QHPSVASA. Residues 199 to 219 form a helical membrane-spanning segment; that stretch reads FGALLLLLLTGHISYLSLVHF. Residues 220-223 lie on the Lumenal side of the membrane; that stretch reads DYGY. Residues 224–244 form a helical membrane-spanning segment; the sequence is NMMANVAIGLVNLAWWLVWCL. At 245–257 the chain is on the cytoplasmic side; it reads RNRQRLPHTRRCM. Residues 258–278 form a helical membrane-spanning segment; sequence VVVVLLQGLSLLELLDFPPLF. Position 279 (tryptophan 279) is a topological domain, lumenal. Residues 280 to 299 form a helical membrane-spanning segment; the sequence is VLDAHAIWHISTIPVHTLFF. The Cytoplasmic portion of the chain corresponds to 300–320; sequence RFLEDDSLYLLKESGAMFKLD.

The protein belongs to the PGAP3 family.

Its subcellular location is the golgi apparatus membrane. Its function is as follows. Involved in the fatty acid remodeling steps of GPI-anchor maturation where the unsaturated acyl chain at sn-2 of inositol phosphate is replaced by a saturated stearoyl chain. May catalyze the first step of the fatty acid remodeling, by removing the unsaturated acyl chain at sn-2 of inositol phosphate, generating a lyso-GPI intermediate. The fatty acid remodeling steps is critical for the integration of GPI-APs into lipid rafts. This is GPI-specific phospholipase A2-like PGAP3 from Mus musculus (Mouse).